Consider the following 70-residue polypeptide: Acyl carrier protein (70 aa).

One can recognise a Carrier domain in the interval 2 to 70; sequence SDIADRVKKI…ETIQTFGDAP (69 aa). An O-(pantetheine 4'-phosphoryl)serine modification is found at Ser37.

The protein belongs to the acyl carrier protein (ACP) family. 4'-phosphopantetheine is transferred from CoA to a specific serine of apo-ACP by AcpS. This modification is essential for activity because fatty acids are bound in thioester linkage to the sulfhydryl of the prosthetic group.

The protein resides in the cytoplasm. It functions in the pathway lipid metabolism; fatty acid biosynthesis. In terms of biological role, carrier of the growing fatty acid chain in fatty acid biosynthesis. In Cereibacter sphaeroides (Rhodobacter sphaeroides), this protein is Acyl carrier protein.